The primary structure comprises 144 residues: Large-conductance mechanosensitive channel (144 aa).

2 helical membrane passes run 14–34 (VLDM…VTSF) and 81–101 (GTFL…FLII).

Belongs to the MscL family. Homopentamer.

The protein localises to the cell inner membrane. Its function is as follows. Channel that opens in response to stretch forces in the membrane lipid bilayer. May participate in the regulation of osmotic pressure changes within the cell. This Bdellovibrio bacteriovorus (strain ATCC 15356 / DSM 50701 / NCIMB 9529 / HD100) protein is Large-conductance mechanosensitive channel.